A 315-amino-acid chain; its full sequence is Probable HTH-type transcriptional regulator SinR (315 aa).

The region spanning 8–65 (RGMRDWMIFIKVAEVGNLSRAARELDISISAVSKSLSRLENSIEVTLLRRDSHHLELT) is the HTH lysR-type domain. Residues 25–44 (LSRAARELDISISAVSKSLS) constitute a DNA-binding region (H-T-H motif).

Belongs to the LysR transcriptional regulatory family.

Its function is as follows. Probable regulatory protein. Its target is not known. The protein is Probable HTH-type transcriptional regulator SinR (sinR) of Salmonella typhimurium (strain LT2 / SGSC1412 / ATCC 700720).